The sequence spans 163 residues: Nucleotide-binding protein Bcer98_0876 (163 aa).

The protein belongs to the YajQ family.

In terms of biological role, nucleotide-binding protein. The protein is Nucleotide-binding protein Bcer98_0876 of Bacillus cytotoxicus (strain DSM 22905 / CIP 110041 / 391-98 / NVH 391-98).